Reading from the N-terminus, the 294-residue chain is Homoserine kinase (294 aa).

83-93 (RPKSGLGSSGA) lines the ATP pocket.

This sequence belongs to the GHMP kinase family. Homoserine kinase subfamily.

Its subcellular location is the cytoplasm. The catalysed reaction is L-homoserine + ATP = O-phospho-L-homoserine + ADP + H(+). It functions in the pathway amino-acid biosynthesis; L-threonine biosynthesis; L-threonine from L-aspartate: step 4/5. Its function is as follows. Catalyzes the ATP-dependent phosphorylation of L-homoserine to L-homoserine phosphate. The polypeptide is Homoserine kinase (Pyrococcus abyssi (strain GE5 / Orsay)).